The following is a 291-amino-acid chain: Succinate--CoA ligase [ADP-forming] subunit alpha 1 (291 aa).

Residues Thr20 to Gln23, Lys46, and Val99 to Glu101 contribute to the CoA site. Tyr162 serves as a coordination point for substrate. Residue His249 is the Tele-phosphohistidine intermediate of the active site.

Belongs to the succinate/malate CoA ligase alpha subunit family. Heterotetramer of two alpha and two beta subunits.

It catalyses the reaction succinate + ATP + CoA = succinyl-CoA + ADP + phosphate. The catalysed reaction is GTP + succinate + CoA = succinyl-CoA + GDP + phosphate. The protein operates within carbohydrate metabolism; tricarboxylic acid cycle; succinate from succinyl-CoA (ligase route): step 1/1. Its function is as follows. Succinyl-CoA synthetase functions in the citric acid cycle (TCA), coupling the hydrolysis of succinyl-CoA to the synthesis of either ATP or GTP and thus represents the only step of substrate-level phosphorylation in the TCA. The alpha subunit of the enzyme binds the substrates coenzyme A and phosphate, while succinate binding and nucleotide specificity is provided by the beta subunit. The polypeptide is Succinate--CoA ligase [ADP-forming] subunit alpha 1 (Archaeoglobus fulgidus (strain ATCC 49558 / DSM 4304 / JCM 9628 / NBRC 100126 / VC-16)).